The chain runs to 41 residues: Large ribosomal subunit protein bL36 (41 aa).

This sequence belongs to the bacterial ribosomal protein bL36 family.

The protein is Large ribosomal subunit protein bL36 of Bartonella bacilliformis (strain ATCC 35685 / KC583 / Herrer 020/F12,63).